Consider the following 203-residue polypeptide: Guanylate kinase (203 aa).

A Guanylate kinase-like domain is found at 3–181; it reads GTLYIVAAPS…AVAEMCAIFT (179 aa). 10-17 is a binding site for ATP; that stretch reads APSGAGKS.

This sequence belongs to the guanylate kinase family.

It localises to the cytoplasm. It carries out the reaction GMP + ATP = GDP + ADP. Its function is as follows. Essential for recycling GMP and indirectly, cGMP. In Xanthomonas euvesicatoria pv. vesicatoria (strain 85-10) (Xanthomonas campestris pv. vesicatoria), this protein is Guanylate kinase.